Here is a 364-residue protein sequence, read N- to C-terminus: Methylthioribose-1-phosphate isomerase (364 aa).

The active-site Proton donor is aspartate 254.

This sequence belongs to the eIF-2B alpha/beta/delta subunits family. MtnA subfamily.

The protein localises to the cytoplasm. It localises to the nucleus. The catalysed reaction is 5-(methylsulfanyl)-alpha-D-ribose 1-phosphate = 5-(methylsulfanyl)-D-ribulose 1-phosphate. Its pathway is amino-acid biosynthesis; L-methionine biosynthesis via salvage pathway; L-methionine from S-methyl-5-thio-alpha-D-ribose 1-phosphate: step 1/6. Functionally, catalyzes the interconversion of methylthioribose-1-phosphate (MTR-1-P) into methylthioribulose-1-phosphate (MTRu-1-P). The chain is Methylthioribose-1-phosphate isomerase from Drosophila melanogaster (Fruit fly).